We begin with the raw amino-acid sequence, 154 residues long: Large ribosomal subunit protein bL19 (154 aa).

The interval 1 to 33 (MAADPKDTTVTDENTETAATAEVETVASAPTSP) is disordered. The segment covering 16–27 (ETAATAEVETVA) has biased composition (low complexity).

Belongs to the bacterial ribosomal protein bL19 family.

This protein is located at the 30S-50S ribosomal subunit interface and may play a role in the structure and function of the aminoacyl-tRNA binding site. The chain is Large ribosomal subunit protein bL19 from Parasynechococcus marenigrum (strain WH8102).